The chain runs to 469 residues: Interstitial collagenase (469 aa).

Residues 1–19 (MHSFPPLLLLLFWGVVSHS) form the signal peptide. Positions 20–99 (FPATLETQEQ…PRCGVPDVAQ (80 aa)) are cleaved as a propeptide — activation peptide. Position 57 is a phosphoserine (serine 57). The Cysteine switch signature appears at 90-97 (PRCGVPDV). Cysteine 92 contributes to the Zn(2+) binding site. Residues 98 to 276 (AQFVLTEGNP…VQPIGPQTPK (179 aa)) form a metalloprotease region. Asparagine 120 carries N-linked (GlcNAc...) asparagine glycosylation. Residues aspartate 124 and aspartate 158 each contribute to the Ca(2+) site. Positions 168 and 170 each coordinate Zn(2+). 4 residues coordinate Ca(2+): aspartate 175, glycine 176, glycine 178, and asparagine 180. Histidine 183 provides a ligand contact to Zn(2+). Ca(2+) contacts are provided by glycine 190, glycine 192, and aspartate 194. Position 196 (histidine 196) interacts with Zn(2+). Aspartate 198, glutamate 199, and glutamate 201 together coordinate Ca(2+). Histidine 218 provides a ligand contact to Zn(2+). The active site involves glutamate 219. 2 residues coordinate Zn(2+): histidine 222 and histidine 228. Phosphothreonine is present on threonine 274. 4 Hemopexin repeats span residues 275 to 324 (PKAC…WPQL), 325 to 371 (PNGL…FGFP), 374 to 422 (VKHI…FPGI), and 423 to 466 (GHKV…WFNC). Cysteine 278 and cysteine 466 are joined by a disulfide. Ca(2+) is bound by residues aspartate 285 and glutamate 329. Position 360 is a phosphotyrosine; by PKDCC (tyrosine 360). Aspartate 378 and aspartate 427 together coordinate Ca(2+).

Belongs to the peptidase M10A family. (Microbial infection) Interacts with HIV-1 Tat. Requires Ca(2+) as cofactor. The cofactor is Zn(2+). In terms of processing, undergoes autolytic cleavage to two major forms (22 kDa and 27 kDa). A minor form (25 kDa) is the glycosylated form of the 22 kDa form. The 27 kDa form has no activity while the 22/25 kDa form can act as activator for collagenase. Tyrosine phosphorylated in platelets by PKDCC/VLK.

It is found in the secreted. Its subcellular location is the extracellular space. It localises to the extracellular matrix. It carries out the reaction Cleavage of the triple helix of collagen at about three-quarters of the length of the molecule from the N-terminus, at 775-Gly-|-Ile-776 in the alpha1(I) chain. Cleaves synthetic substrates and alpha-macroglobulins at bonds where P1' is a hydrophobic residue.. With respect to regulation, can be activated without removal of the activation peptide. In terms of biological role, cleaves collagens of types I, II, and III at one site in the helical domain. Also cleaves collagens of types VII and X. In case of HIV infection, interacts and cleaves the secreted viral Tat protein, leading to a decrease in neuronal Tat's mediated neurotoxicity. The chain is Interstitial collagenase (MMP1) from Homo sapiens (Human).